Reading from the N-terminus, the 64-residue chain is Prokaryotic ubiquitin-like protein Pup (64 aa).

Residues 1–11 (MAQEQTKRGGG) show a composition bias toward basic and acidic residues. The disordered stretch occupies residues 1–37 (MAQEQTKRGGGGDDEDDFASSTAAGQERREKLAEDTD). The interval 21 to 58 (STAAGQERREKLAEDTDDLLDEIDDVLEENAEDFVRAY) is ARC ATPase binding. Residues 24 to 52 (AGQERREKLAEDTDDLLDEIDDVLEENAE) adopt a coiled-coil conformation. Position 64 is a deamidated glutamine (glutamine 64). Residue glutamine 64 forms an Isoglutamyl lysine isopeptide (Gln-Lys) (interchain with K-? in acceptor proteins) linkage.

This sequence belongs to the prokaryotic ubiquitin-like protein family. In terms of assembly, strongly interacts with the proteasome-associated ATPase ARC through a hydrophobic interface; the interacting region of Pup lies in its C-terminal half. There is one Pup binding site per ARC hexamer ring. Post-translationally, is modified by deamidation of its C-terminal glutamine to glutamate by the deamidase Dop, a prerequisite to the subsequent pupylation process.

The protein operates within protein degradation; proteasomal Pup-dependent pathway. Functionally, protein modifier that is covalently attached to lysine residues of substrate proteins, thereby targeting them for proteasomal degradation. The tagging system is termed pupylation. The protein is Prokaryotic ubiquitin-like protein Pup of Mycolicibacterium paratuberculosis (strain ATCC BAA-968 / K-10) (Mycobacterium paratuberculosis).